The chain runs to 618 residues: MTTQAPPTSLLPLSPEQLARLQAAVGEFSPTQMAWLSGYFWGMVNQQPGAVASPAVAAPPPVTVTLISASQTGNARRLAEQLRDDLLAAQLSVNLVNAGDYKFKQIAQERLLVVVASTQGEGEPAEEAVALHKFLFSKKAPKLSETAFAVFGLGDTSYEHFCQAGKDFDSKLAELGAQRLLDRVDADVEYQVQAQQWRQQVVATLQAKVPAQSTAPTQFIAPTQFIAPTQSTTPAAAAITSGGTTTVSPYSKTAPLTAQLSVQQKVTGRNSEKDVRHIEIDLGDSGLRYQPGDALGVWFDNDPALVEELLALLWLKGDEPVSIDGQNMPLAQALLSHLELTQNTTLIVDKYAALSRDETLIALLADKPALQLYAKNTPFVDMVRQAPSDLNADQLVGLLRPLTPRLYSIASSQAETENEVHITVGVVRYDIDGRARSGGASGYLADRLEVDGDIRVFIEHNDNFRLPANPETPVIMIGPGTGIAPFRAFMQQREVDGASGKNWLFFGNPHFTEDFLYQVEWQRYVKEGVLTRIDLAWSRDQAHKIYVQDKLREQGAELWNWIQQGAHIYVCGDANRMAKDVEQVLLDVVALHGAMDAEQADEYLSELRQARRYQRDVY.

Residues 64-202 (VTLISASQTG…QAQQWRQQVV (139 aa)) form the Flavodoxin-like domain. FMN contacts are provided by residues 70-75 (SQTGNA), 117-120 (STQG), and 153-162 (LGDTSYEHFC). The FAD-binding FR-type domain occupies 253-467 (TAPLTAQLSV…IEHNDNFRLP (215 aa)). FAD-binding positions include Thr341, Lys375, 405–408 (RLYS), 423–425 (TVG), Tyr429, and 438–441 (GGAS). Residues 538-539 (SR), 544-548 (KIYVQ), and Asp580 each bind NADP(+). FAD is bound at residue Tyr618.

The protein belongs to the NADPH-dependent sulphite reductase flavoprotein subunit CysJ family. In the N-terminal section; belongs to the flavodoxin family. It in the C-terminal section; belongs to the flavoprotein pyridine nucleotide cytochrome reductase family. As to quaternary structure, alpha(8)-beta(8). The alpha component is a flavoprotein, the beta component is a hemoprotein. FAD is required as a cofactor. FMN serves as cofactor.

The enzyme catalyses hydrogen sulfide + 3 NADP(+) + 3 H2O = sulfite + 3 NADPH + 4 H(+). It participates in sulfur metabolism; hydrogen sulfide biosynthesis; hydrogen sulfide from sulfite (NADPH route): step 1/1. Functionally, component of the sulfite reductase complex that catalyzes the 6-electron reduction of sulfite to sulfide. This is one of several activities required for the biosynthesis of L-cysteine from sulfate. The flavoprotein component catalyzes the electron flow from NADPH -&gt; FAD -&gt; FMN to the hemoprotein component. This chain is Sulfite reductase [NADPH] flavoprotein alpha-component, found in Yersinia pseudotuberculosis serotype I (strain IP32953).